Reading from the N-terminus, the 531-residue chain is 2,3-bisphosphoglycerate-independent phosphoglycerate mutase (531 aa).

Mn(2+)-binding residues include Asp15 and Ser65. The active-site Phosphoserine intermediate is Ser65. Substrate contacts are provided by residues His126, 155-156 (RD), Arg187, Arg193, 257-260 (RPDR), and Lys330. 5 residues coordinate Mn(2+): Asp397, His401, Asp438, His439, and His456.

The protein belongs to the BPG-independent phosphoglycerate mutase family. In terms of assembly, monomer. Mn(2+) serves as cofactor.

The enzyme catalyses (2R)-2-phosphoglycerate = (2R)-3-phosphoglycerate. The protein operates within carbohydrate degradation; glycolysis; pyruvate from D-glyceraldehyde 3-phosphate: step 3/5. Functionally, catalyzes the interconversion of 2-phosphoglycerate and 3-phosphoglycerate. The sequence is that of 2,3-bisphosphoglycerate-independent phosphoglycerate mutase from Thermosynechococcus vestitus (strain NIES-2133 / IAM M-273 / BP-1).